A 294-amino-acid chain; its full sequence is Acetylglutamate kinase (294 aa).

Substrate contacts are provided by residues 64–65 (GG), R86, and N189.

Belongs to the acetylglutamate kinase family. ArgB subfamily.

The protein localises to the cytoplasm. It carries out the reaction N-acetyl-L-glutamate + ATP = N-acetyl-L-glutamyl 5-phosphate + ADP. Its pathway is amino-acid biosynthesis; L-arginine biosynthesis; N(2)-acetyl-L-ornithine from L-glutamate: step 2/4. Catalyzes the ATP-dependent phosphorylation of N-acetyl-L-glutamate. The protein is Acetylglutamate kinase of Carboxydothermus hydrogenoformans (strain ATCC BAA-161 / DSM 6008 / Z-2901).